The sequence spans 511 residues: Piperic acid synthase CYP719A37 (511 aa).

The chain crosses the membrane as a helical span at residues 7–27 (VDPALFSAFVSIIFFFLGMFL). Position 455 (C455) interacts with heme.

Belongs to the cytochrome P450 family. Requires heme as cofactor. As to expression, specifically expressed in immature fruits and roots. Barely detectable in young leaves and flowering spadices.

It is found in the membrane. The protein localises to the endoplasmic reticulum membrane. The catalysed reaction is (E,E)-feruperate + reduced [NADPH--hemoprotein reductase] + O2 = (E,E)-piperate + oxidized [NADPH--hemoprotein reductase] + 2 H2O + H(+). It participates in aromatic compound metabolism. Cytochrome P450 monooxygenase involved in the biosynthesis of aromatic piperamides natural products such as piperine (1-piperoyl-piperidine), the pungent principle contributing, together with several terpenoids, to the aromatic properties of black pepper fruits, and displaying numerous pharmacological activities such as antiproliferative, antitumor, antiangiogenesis, antioxidant, antidiabetic, antiobesity, cardioprotective, antimicrobial, antiaging, and immunomodulatory effects. Catalyzes the conversion of feruperic acid (5-(4-hydroxy-3-methoxyphenyl)-2,4-pentadienoic acid) to piperic acid. Inactive toward ferulic acid and feruperine. This Piper nigrum (Black pepper) protein is Piperic acid synthase CYP719A37.